Consider the following 352-residue polypeptide: Iron-sulfur cluster carrier protein (352 aa).

114–121 is a binding site for ATP; sequence GKGGVGKS.

This sequence belongs to the Mrp/NBP35 ATP-binding proteins family. Homodimer. Interacts with BrxC.

Functionally, binds and transfers iron-sulfur (Fe-S) clusters to target apoproteins. Can hydrolyze ATP. Its function is as follows. Negatively regulates the expression of hpr/scoC. The effect on hpr/scoC may be indirect. The chain is Iron-sulfur cluster carrier protein (salA) from Bacillus subtilis (strain 168).